A 450-amino-acid chain; its full sequence is MRFSWKNICLPISCINNTNQKKTTTTNPPKEKLLLLSRQTSVPSRVYMSDFSNSTISLNDFSNSFFINIHIFTYEELKTITQGFSKYNFLGEGGFGEVYKGFVDDSLKTGLKDQPVAVKALKREGGQGHREWLAEVIILGQLKHPHLVNLVGYCCEDDERLLVYEYMERGNLEDHLFQKYGGALPWLTRVKILLGAAKGLEFLHKQEKPVIYRDFKPSNILLSSDFSSKLSDFGLATDGSEEEDSNFTKSVMGTEGYAAPEYISAGNLTTMSDVFSFGVVLLEMLTARKAVEKYRAQRGRNLVEWARPMLKDPNKLERIIDPSLEGKYSVEGIRKAAALAYQCLSHNPKSRPTMTTVVKTLEPILDLKDIQNGPFVYIVPVAGVSEVHEIKCKDDVKVVKEETEKDAKVFPRHRAGRRNRRKHKAMRSRAVYSDTALYKSLGTSLYNPAN.

Phosphothreonine is present on threonine 73. Residues 84–365 form the Protein kinase domain; that stretch reads FSKYNFLGEG…TVVKTLEPIL (282 aa). ATP-binding positions include 90 to 98 and lysine 119; that span reads LGEGGFGEV. Tyrosine 164 is modified (phosphotyrosine). Aspartate 214 acts as the Proton acceptor in catalysis. A Phosphoserine modification is found at serine 218. Residue threonine 254 is modified to Phosphothreonine. Tyrosine 262 carries the phosphotyrosine modification.

It belongs to the protein kinase superfamily. Ser/Thr protein kinase family.

It carries out the reaction L-seryl-[protein] + ATP = O-phospho-L-seryl-[protein] + ADP + H(+). The catalysed reaction is L-threonyl-[protein] + ATP = O-phospho-L-threonyl-[protein] + ADP + H(+). This is Putative receptor-like protein kinase At1g72540 from Arabidopsis thaliana (Mouse-ear cress).